Reading from the N-terminus, the 339-residue chain is Dihydroorotase (339 aa).

Residues His12 and His14 each contribute to the Zn(2+) site. Residues 14–16 (HVR) and Asn40 contribute to the substrate site. Positions 94, 133, 167, and 239 each coordinate Zn(2+). Lys94 carries the N6-carboxylysine modification. Residue His133 coordinates substrate. Asp239 is a catalytic residue. Positions 243 and 255 each coordinate substrate.

The protein belongs to the metallo-dependent hydrolases superfamily. DHOase family. Class II DHOase subfamily. Homodimer. The cofactor is Zn(2+).

The enzyme catalyses (S)-dihydroorotate + H2O = N-carbamoyl-L-aspartate + H(+). The protein operates within pyrimidine metabolism; UMP biosynthesis via de novo pathway; (S)-dihydroorotate from bicarbonate: step 3/3. Catalyzes the reversible cyclization of carbamoyl aspartate to dihydroorotate. This Helicobacter pylori (strain P12) protein is Dihydroorotase.